The chain runs to 209 residues: Ribosomal RNA large subunit methyltransferase E (209 aa).

5 residues coordinate S-adenosyl-L-methionine: glycine 63, tryptophan 65, aspartate 83, aspartate 99, and aspartate 124. Lysine 164 functions as the Proton acceptor in the catalytic mechanism.

Belongs to the class I-like SAM-binding methyltransferase superfamily. RNA methyltransferase RlmE family.

The protein localises to the cytoplasm. The catalysed reaction is uridine(2552) in 23S rRNA + S-adenosyl-L-methionine = 2'-O-methyluridine(2552) in 23S rRNA + S-adenosyl-L-homocysteine + H(+). In terms of biological role, specifically methylates the uridine in position 2552 of 23S rRNA at the 2'-O position of the ribose in the fully assembled 50S ribosomal subunit. In Shewanella putrefaciens (strain CN-32 / ATCC BAA-453), this protein is Ribosomal RNA large subunit methyltransferase E.